The following is a 294-amino-acid chain: MTDTLNLVVITGMSGAGKTVAMQSFEDLGYFCVDNMPPSLLPKFWELVKESGKVTKIALVIDLRSRAFYDGIIEMLSGLDNTQFVTTKILFLDASDEELVSRYKETRRSHPLARNGRLMDGIHKERELLTEIRNQSQMVVNTSMLSPRELREQIFRVFKTSDNPSFHIEVMSFGFKYGLPIDADIVMDVRFLPNPYYVAEFKALNGLDKPVRDYVMEQPATEKFYQQLTALLKSIMPGYLKEGKTSVTIAIGCTGGQHRSVALAQRLADDLAVDYPVDVTHRDMKKRKESVNRS.

12–19 (GMSGAGKT) is an ATP binding site. 62–65 (DLRS) is a binding site for GTP.

This sequence belongs to the RapZ-like family.

Displays ATPase and GTPase activities. This Latilactobacillus sakei subsp. sakei (strain 23K) (Lactobacillus sakei subsp. sakei) protein is Nucleotide-binding protein LCA_0526.